The following is a 215-amino-acid chain: Nucleoside triphosphate pyrophosphatase (215 aa).

The active-site Proton acceptor is the aspartate 77.

Belongs to the Maf family. The cofactor is a divalent metal cation.

It localises to the cytoplasm. It carries out the reaction a ribonucleoside 5'-triphosphate + H2O = a ribonucleoside 5'-phosphate + diphosphate + H(+). The enzyme catalyses a 2'-deoxyribonucleoside 5'-triphosphate + H2O = a 2'-deoxyribonucleoside 5'-phosphate + diphosphate + H(+). In terms of biological role, nucleoside triphosphate pyrophosphatase. May have a dual role in cell division arrest and in preventing the incorporation of modified nucleotides into cellular nucleic acids. This Rickettsia peacockii (strain Rustic) protein is Nucleoside triphosphate pyrophosphatase.